The chain runs to 514 residues: Peptide chain release factor 3 (514 aa).

Positions lysine 8–histidine 268 constitute a tr-type G domain. GTP-binding positions include serine 17–threonine 24, aspartate 85–histidine 89, and asparagine 139–aspartate 142.

This sequence belongs to the TRAFAC class translation factor GTPase superfamily. Classic translation factor GTPase family. PrfC subfamily.

It localises to the cytoplasm. In terms of biological role, increases the formation of ribosomal termination complexes and stimulates activities of RF-1 and RF-2. It binds guanine nucleotides and has strong preference for UGA stop codons. It may interact directly with the ribosome. The stimulation of RF-1 and RF-2 is significantly reduced by GTP and GDP, but not by GMP. This chain is Peptide chain release factor 3, found in Streptococcus pneumoniae (strain CGSP14).